The primary structure comprises 401 residues: UDP-N-acetylglucosamine--N-acetylmuramyl-(pentapeptide) pyrophosphoryl-undecaprenol N-acetylglucosamine transferase (401 aa).

The disordered stretch occupies residues 1–24; the sequence is MTRISVPAGQERNDGGISVPAGQE. Residues 39-41, Asn157, Arg194, Ser228, and Gln324 contribute to the UDP-N-acetyl-alpha-D-glucosamine site; that span reads TAG.

Belongs to the glycosyltransferase 28 family. MurG subfamily.

The protein localises to the cell membrane. The enzyme catalyses di-trans,octa-cis-undecaprenyl diphospho-N-acetyl-alpha-D-muramoyl-L-alanyl-D-glutamyl-meso-2,6-diaminopimeloyl-D-alanyl-D-alanine + UDP-N-acetyl-alpha-D-glucosamine = di-trans,octa-cis-undecaprenyl diphospho-[N-acetyl-alpha-D-glucosaminyl-(1-&gt;4)]-N-acetyl-alpha-D-muramoyl-L-alanyl-D-glutamyl-meso-2,6-diaminopimeloyl-D-alanyl-D-alanine + UDP + H(+). It functions in the pathway cell wall biogenesis; peptidoglycan biosynthesis. In terms of biological role, cell wall formation. Catalyzes the transfer of a GlcNAc subunit on undecaprenyl-pyrophosphoryl-MurNAc-pentapeptide (lipid intermediate I) to form undecaprenyl-pyrophosphoryl-MurNAc-(pentapeptide)GlcNAc (lipid intermediate II). This chain is UDP-N-acetylglucosamine--N-acetylmuramyl-(pentapeptide) pyrophosphoryl-undecaprenol N-acetylglucosamine transferase, found in Mycolicibacterium vanbaalenii (strain DSM 7251 / JCM 13017 / BCRC 16820 / KCTC 9966 / NRRL B-24157 / PYR-1) (Mycobacterium vanbaalenii).